Consider the following 119-residue polypeptide: Protein TusC (119 aa).

Belongs to the DsrF/TusC family. Heterohexamer, formed by a dimer of trimers. The hexameric TusBCD complex contains 2 copies each of TusB, TusC and TusD. The TusBCD complex interacts with TusE.

The protein localises to the cytoplasm. Functionally, part of a sulfur-relay system required for 2-thiolation of 5-methylaminomethyl-2-thiouridine (mnm(5)s(2)U) at tRNA wobble positions. The polypeptide is Protein TusC (Shigella boydii serotype 18 (strain CDC 3083-94 / BS512)).